A 310-amino-acid polypeptide reads, in one-letter code: Mycothiol acetyltransferase (310 aa).

N-acetyltransferase domains are found at residues 5–155 and 160–309; these read TTVE…HPAR and PPFR…LPAA. Residue 80–82 participates in acetyl-CoA binding; sequence LLV. Residues Asp-187, Lys-226, and Glu-238 each coordinate 1D-myo-inositol 2-(L-cysteinylamino)-2-deoxy-alpha-D-glucopyranoside. 242–244 lines the acetyl-CoA pocket; sequence IAT. Tyr-276 serves as a coordination point for 1D-myo-inositol 2-(L-cysteinylamino)-2-deoxy-alpha-D-glucopyranoside. 281-286 provides a ligand contact to acetyl-CoA; that stretch reads NERALR.

This sequence belongs to the acetyltransferase family. MshD subfamily. Monomer.

It carries out the reaction 1D-myo-inositol 2-(L-cysteinylamino)-2-deoxy-alpha-D-glucopyranoside + acetyl-CoA = mycothiol + CoA + H(+). Functionally, catalyzes the transfer of acetyl from acetyl-CoA to desacetylmycothiol (Cys-GlcN-Ins) to form mycothiol. The chain is Mycothiol acetyltransferase from Acidimicrobium ferrooxidans (strain DSM 10331 / JCM 15462 / NBRC 103882 / ICP).